An 89-amino-acid polypeptide reads, in one-letter code: Small ribosomal subunit protein uS15 (89 aa).

The protein belongs to the universal ribosomal protein uS15 family. As to quaternary structure, part of the 30S ribosomal subunit. Forms a bridge to the 50S subunit in the 70S ribosome, contacting the 23S rRNA.

One of the primary rRNA binding proteins, it binds directly to 16S rRNA where it helps nucleate assembly of the platform of the 30S subunit by binding and bridging several RNA helices of the 16S rRNA. Functionally, forms an intersubunit bridge (bridge B4) with the 23S rRNA of the 50S subunit in the ribosome. This chain is Small ribosomal subunit protein uS15, found in Rhodococcus erythropolis (strain PR4 / NBRC 100887).